Here is a 277-residue protein sequence, read N- to C-terminus: Chitosanase (277 aa).

The first 35 residues, 1–35 (MKISMQKADFWKKAAISLLVFTMFFTLMMSETVFA), serve as a signal peptide directing secretion. Glu-54 acts as the Proton donor in catalysis. The Nucleophile role is filled by Asp-70.

The protein belongs to the glycosyl hydrolase 46 family.

It localises to the secreted. It carries out the reaction Endohydrolysis of beta-(1-&gt;4)-linkages between D-glucosamine residues in a partly acetylated chitosan.. Its function is as follows. Aids in the defense against invading fungal pathogens by degrading their cell wall chitosan. The polypeptide is Chitosanase (csn) (Bacillus subtilis (strain 168)).